The following is a 79-amino-acid chain: Mycoredoxin 1 (79 aa).

Residues 1–79 (MSNVTIYATD…EVIAKIEALA (79 aa)) form the Glutaredoxin domain.

The protein belongs to the glutaredoxin family.

Its subcellular location is the cytoplasm. It carries out the reaction [mycoredoxin]-L-cysteine + arseno-mycothiol + H(+) = [mycoredoxin]-S-mycothiol-L-cysteine + arsenite. In terms of biological role, involved in defense against toxic arsenate. Involved in the mycothiol/myoredoxin redox pathway which uses a mycothioltransferase mechanism; functions as a monothiol mixed disulfide reductase and is recycled by a second mycothiol forming mycothione which in turn is reduced in a NADPH-dependent manner. The chain is Mycoredoxin 1 (mrx1) from Corynebacterium glutamicum (strain ATCC 13032 / K051).